A 436-amino-acid chain; its full sequence is Hydrogenobyrinate a,c-diamide synthase (436 aa).

A GATase cobBQ-type domain is found at 244–435 (HIAVARDDAF…MHVIDFCGEK (192 aa)). Cys-327 functions as the Nucleophile in the catalytic mechanism.

The protein belongs to the CobB/CbiA family. It depends on Mg(2+) as a cofactor.

It carries out the reaction hydrogenobyrinate + 2 L-glutamine + 2 ATP + 2 H2O = hydrogenobyrinate a,c-diamide + 2 L-glutamate + 2 ADP + 2 phosphate + 2 H(+). It functions in the pathway cofactor biosynthesis; adenosylcobalamin biosynthesis; cob(II)yrinate a,c-diamide from precorrin-2 (aerobic route): step 9/10. Functionally, catalyzes the ATP-dependent amidation of the two carboxylate groups at positions a and c of hydrogenobyrinate, using either L-glutamine or ammonia as the nitrogen source. This Brucella anthropi (strain ATCC 49188 / DSM 6882 / CCUG 24695 / JCM 21032 / LMG 3331 / NBRC 15819 / NCTC 12168 / Alc 37) (Ochrobactrum anthropi) protein is Hydrogenobyrinate a,c-diamide synthase.